The sequence spans 4493 residues: Mucin-17 (4493 aa).

The N-terminal stretch at 1 to 25 (MPRPGTMALCLLTLVLSLLPPQAAA) is a signal peptide. Residues 26 to 4393 (EQDLSVNRAV…QGTQKSLVYG (4368 aa)) are Extracellular-facing. Over residues 88–105 (NPEMTSIESSVTSDTPGV) the composition is skewed to polar residues. 4 disordered regions span residues 88-159 (NPEM…SISS), 188-223 (LTTSTQASSSPTTPESTTIPKSTNSEGSTPLTSMPA), 248-277 (TISAQASSSPTTAEGPSLSNSAPSGGSTPL), and 306-344 (VITSTEASSSPTTAEGTSIPTSTYTEGSTPLTSTPASTM). Positions 106-146 (SSTRMTPTESRTTSESTSDSTTLFPSSTEDTSSPTTPEGTD) are enriched in low complexity. The span at 148–159 (PMSTPSEESISS) shows a compositional bias: polar residues. 57 repeat units span residues 185 to 245 (STPL…EIST), 246 to 300 (PVTI…TTPA), 301 to 361 (ATNI…PVDT), 362 to 418 (STLV…TIPV), 420 to 477 (SKTF…TTPV), 479 to 538 (SKTQ…PVDT), 539 to 597 (STPV…PADS), 598 to 654 (NTFV…TTPV), 656 to 715 (SNTP…PVDT), 716 to 774 (STPV…PLDT), 775 to 831 (STHI…TTPV), 833 to 892 (SNSP…PVDT), 893 to 951 (STPV…PVDT), 952 to 1010 (STPV…PVDS), 1011 to 1069 (NTPL…PADT), 1070 to 1121 (STPV…ASTL), 1122 to 1187 (STTP…PVDS), 1188 to 1246 (KTQV…PVDT), 1247 to 1305 (STPV…PVDT), 1306 to 1364 (KGPV…PVDN), 1365 to 1423 (STPV…PVDT), 1424 to 1482 (STPG…PVDS), 1483 to 1541 (NSPV…PAVT), 1542 to 1600 (STPV…PIDS), 1601 to 1656 (KTQV…TTPV), 1658 to 1717 (SNSP…PVDN), 1718 to 1776 (STPV…PIDT), 1777 to 1835 (STPV…PVDS), 1836 to 1895 (NSPV…AVTS), 1896 to 1951 (TPVT…TTLA), 1953 to 2012 (TRTP…PVDT), 2013 to 2071 (STPA…PVDS), 2072 to 2127 (KTQV…TTPV), 2129 to 2188 (SNSP…PVDT), 2189 to 2247 (STPV…PVDT), 2248 to 2306 (STPV…PVDS), 2307 to 2365 (NTPF…PADT), 2366 to 2424 (STPV…PVDT), 2425 to 2483 (STPV…PVDT), 2484 to 2540 (STPM…TTPV), 2542 to 2601 (SNSP…PVDT), 2602 to 2653 (SIPV…ASTL), 2654 to 2719 (STTP…PVDT), 2720 to 2770 (STPV…EAST), 2772 to 2837 (STTA…PVDT), 2838 to 2896 (STPV…PVDT), 2897 to 2955 (SIPV…PVDT), 2956 to 3014 (RTPV…PADT), 3015 to 3073 (STPV…PVDS), 3074 to 3132 (NSPV…PVDT), 3133 to 3191 (STPV…PVDT), 3192 to 3247 (STPV…TTPV), 3249 to 3308 (SNTP…PADT), 3309 to 3367 (STPV…PVDT), 3368 to 3426 (STPV…PVDS), 3427 to 3485 (NTLV…PVDT), and 3486 to 3544 (STPV…PVDS). The interval 185 to 3727 (STPLTTSTQA…SVVTSTPVTT (3543 aa)) is 59 X approximate tandem repeats. Residues 188–210 (LTTSTQASSSPTTPESTTIPKST) show a composition bias toward low complexity. Positions 211 to 223 (NSEGSTPLTSMPA) are enriched in polar residues. A compositionally biased stretch (low complexity) spans 308–323 (TSTEASSSPTTAEGTS). Residues 324-344 (IPTSTYTEGSTPLTSTPASTM) show a composition bias toward polar residues. Low complexity predominate over residues 425-441 (TTASEASSSPTTAEDTS). 6 disordered regions span residues 425–629 (TTAS…ERGT), 644–868 (SEAS…TPLT), 886–1104 (STTP…TPLT), 1116–1163 (SEAS…TPLA), 1175–1279 (SEAN…GSTL), and 1296–1338 (STLL…GRTP). Residues 442–483 (IATSTPSEGSTPLTSMPVSTTPVASSEASNLSTTPVDSKTQV) show a composition bias toward polar residues. An N-linked (GlcNAc...) asparagine glycan is attached at asparagine 471. Over residues 484 to 497 (TTSTEASSSPPTAE) the composition is skewed to low complexity. Polar residues predominate over residues 498 to 528 (VNSMPTSTPSEGSTPLTSMSVSTMPVASSEA). Composition is skewed to low complexity over residues 529-573 (STLS…TPLT) and 584-618 (SSEASTTSTTPADSNTFVTTSSEASSSSTTAEGTS). 2 stretches are compositionally biased toward polar residues: residues 619–629 (MPTSTYSERGT) and 644–660 (SEASTLSTTPVDSNTPV). Residues 661 to 677 (TTSTEATSSSTTAEGTS) are compositionally biased toward low complexity. The span at 678–705 (MPTSTYTEGSTPLTSMPVNTTLVASSEA) shows a compositional bias: polar residues. A glycan (N-linked (GlcNAc...) asparagine) is linked at asparagine 696. Over residues 706 to 733 (STLSTTPVDTSTPVTTSTEASSSPTTAD) the composition is skewed to low complexity. Residues 737 to 754 (MPTSTPSEGSTPLTSMPV) are compositionally biased toward polar residues. Residues 755–776 (SKTLLTSSEASTLSTTPLDTST) are compositionally biased toward low complexity. The span at 777–832 (HITTSTEASCSPTTTEGTSMPISTPSEGSPLLTSIPVSITPVTSPEASTLSTTPVD) shows a compositional bias: polar residues. Positions 833–849 (SNSPVTTSTEVSSSPTP) are enriched in low complexity. Residues 854 to 868 (SMPTSTYSEGRTPLT) are compositionally biased toward polar residues. Residues 886-900 (STTPVDTSTPVTNST) show a composition bias toward low complexity. Residue asparagine 898 is glycosylated (N-linked (GlcNAc...) asparagine). Over residues 901–944 (EARSSPTTSEGTSMPTSTPGEGSTPLTSMPDSTTPVVSSEARTL) the composition is skewed to polar residues. Low complexity predominate over residues 945-972 (SATPVDTSTPVTTSTEATSSPTTAEGTS). A compositionally biased stretch (polar residues) spans 973–1011 (IPTSTPSEGTTPLTSTPVSHTLVANSEASTLSTTPVDSN). Residues 1012-1021 (TPLTTSTEAS) are compositionally biased toward low complexity. Positions 1029-1062 (GTSMPTSTPSEGSTPLTRMPVSTTMVASSETSTL) are enriched in polar residues. Low complexity predominate over residues 1063–1090 (STTPADTSTPVTTYSQASSSSTTADGTS). Composition is skewed to polar residues over residues 1091-1104 (MPTSTYSEGSTPLT) and 1116-1132 (SEASTLSTTPVDTSIPV). Positions 1133 to 1149 (TTSTEASSSPTTAEGTS) are enriched in low complexity. Polar residues-rich tracts occupy residues 1175 to 1198 (SEANTLSTTPVDSKTQVATSTEAS) and 1205 to 1222 (EVTSMPTSTPGERSTPLT). Over residues 1237–1279 (STLSTSPVDTSTPVTTSAETSSSPTTAEGTSLPTSTTSEGSTL) the composition is skewed to low complexity. 2 stretches are compositionally biased toward polar residues: residues 1310–1320 (VTSNEVSSSPT) and 1326–1338 (SMPTSTYSEGRTP). Asparagine 1345 carries N-linked (GlcNAc...) asparagine glycosylation. The span at 1360–1394 (TPVDNSTPVTTSTEACSSPTTSEGTSMPNSNPSEG) shows a compositional bias: polar residues. Disordered stretches follow at residues 1360–1516 (TPVD…STAL), 1537–1575 (TPAVTSTPVTTYSQASSSPTTADGTSMQTSTYSEGSTPL), 1590–1930 (ANTL…PLTS), 1947–2163 (STTL…RTPL), 2177–2281 (AIST…TTPL), 2295–2501 (EVST…TTAE), 2524–2630 (TTPV…TPSE), 2647–2693 (SSEA…RSTP), 2709–2751 (ASTL…DGST), 2765–2853 (SSEA…SPTT), 2879–2925 (TPVA…TPSE), 2942–3167 (GSEA…TPLT), 3182–3577 (STLS…GSSS), 3589–3635 (TSSE…EVST), 3667–3701 (ITSTQVSSSPVTPEGTTMPIWTPSEGSTPLTTMPV), 3785–3812 (MTTASEGSSSPTTLEGTTTMPMSTTSER), 3829–3849 (PSEASTLSTPPGDTSTPLLTS), 3892–3914 (ASIASTPPLDTSTTFTPSTDTAS), 3965–3988 (VITSTELNTPSTSSSSTTTSFSTT), and 4008–4129 (STAP…TPTV). 2 stretches are compositionally biased toward low complexity: residues 1395–1415 (TTPLTSIPVSTTPVVSSEAST) and 1423–1442 (TSTPGTTSAEATSSPTTAEG). Residues 1461–1483 (PVSNTPVANSEASTLSTTPVDSN) are compositionally biased toward polar residues. A compositionally biased stretch (low complexity) spans 1484–1499 (SPVVTSTAVSSSPTPA). The segment covering 1504–1516 (IAISTPSEGSTAL) has biased composition (polar residues). The span at 1537–1547 (TPAVTSTPVTT) shows a compositional bias: low complexity. Polar residues-rich tracts occupy residues 1548–1575 (YSQASSSPTTADGTSMQTSTYSEGSTPL) and 1590–1604 (ANTLSTTPIDSKTQV). The segment covering 1605–1620 (TASTEASSSTTAEGSS) has biased composition (low complexity). 2 stretches are compositionally biased toward polar residues: residues 1621-1673 (MTIS…SSPT) and 1679-1775 (SMPT…TPID). A compositionally biased stretch (low complexity) spans 1776 to 1797 (TSTPVTTSTEATSSPTTAEGTS). A compositionally biased stretch (polar residues) spans 1798–1836 (IPTSTLSEGMTPLTSTPVSHTLVANSEASTLSTTPVDSN). The span at 1837 to 1852 (SPVVTSTAVSSSPTPA) shows a compositional bias: low complexity. Positions 1856-1883 (SIATSTPSEGSTALTSIPVSTTTVASSE) are enriched in polar residues. The span at 1884-1900 (TNTLSTTPAVTSTPVTT) shows a compositional bias: low complexity. Polar residues-rich tracts occupy residues 1901–1921 (YAQVSSSPTTADGSSMPTSTP) and 1947–1976 (STTLADTRTPVTTYSQASSSPTTADGTSMP). The span at 1984-2033 (STPLTSMPLSTTLVVSSEASTLSTTPVDTSTPATTSTEGSSSPTTAGGTS) shows a compositional bias: low complexity. Composition is skewed to polar residues over residues 2034–2043 (IQTSTPSERT) and 2051–2077 (VSTTLVVSSEGNTLSTTPVDSKTQVTN). Asparagine 2077 carries N-linked (GlcNAc...) asparagine glycosylation. The span at 2078–2091 (STEASSSATAEGSS) shows a compositional bias: low complexity. Residues 2092 to 2156 (MTISAPSEGS…EGTSMQTSTY (65 aa)) show a composition bias toward polar residues. Low complexity predominate over residues 2177–2196 (AISTLSTTPVDTSTPVTNST). N-linked (GlcNAc...) asparagine glycosylation occurs at asparagine 2194. Over residues 2197-2240 (EARSSPTTSEGTSMPTSTPSEGSTPFTSMPVSTMPVVTSEASTL) the composition is skewed to polar residues. Residues 2241 to 2268 (SATPVDTSTPVTTSTEATSSPTTAEGTS) are compositionally biased toward low complexity. Composition is skewed to polar residues over residues 2269-2281 (IPTSTLSEGTTPL) and 2295-2307 (EVSTLSTTPVDSN). The span at 2308 to 2317 (TPFTTSTEAS) shows a compositional bias: low complexity. Over residues 2325-2358 (GTSMPTSTSSEGNTPLTRMPVSTTMVASFETSTL) the composition is skewed to polar residues. Positions 2359–2371 (STTPADTSTPVTT) are enriched in low complexity. Over residues 2372-2395 (YSQAGSSPTTADDTSMPTSTYSEG) the composition is skewed to polar residues. 2 stretches are compositionally biased toward low complexity: residues 2396 to 2445 (STPL…EGTS) and 2462 to 2499 (PVSTTPVVSSEAGTLSTTPVDTSTPMTTSTEASSSPTT). A compositionally biased stretch (polar residues) spans 2524 to 2547 (TTPVASPEASTLSTTPVDSNSPVV). A compositionally biased stretch (low complexity) spans 2548–2563 (TSTEISSSATSAEGTS). Over residues 2564 to 2576 (MPTSTYSEGSTPL) the composition is skewed to polar residues. Residues 2586-2617 (LASSEASTLSTTPVDTSIPVTTSTETSSSPTT) show a composition bias toward low complexity. Polar residues predominate over residues 2618-2628 (AKDTSMPISTP). Over residues 2654–2681 (STTPVDTRTLVTTSTGTSSSPTTAEGSS) the composition is skewed to low complexity. The span at 2682–2693 (MPTSTPGERSTP) shows a compositional bias: polar residues. Positions 2710–2740 (STLSTTPVDTSTPVTTSAEASSSPTTAEGTS) are enriched in low complexity. A compositionally biased stretch (polar residues) spans 2741-2751 (MRISTPSDGST). Composition is skewed to low complexity over residues 2765-2816 (SSEA…TSMP) and 2829-2853 (TLSTTPVDTSTPVTTSTKASSSPTT). A compositionally biased stretch (polar residues) spans 2879–2900 (TPVASSEASTLSTTPVDTSIPV). Low complexity-rich tracts occupy residues 2901 to 2917 (TTSTEGSSSPTTAEGTS) and 2950 to 2976 (TTPVDTRTPVTTSAEASSSPTTAEGTS). Polar residues predominate over residues 2988 to 3009 (PLTSMSVSTMPVASSEASTLSR). Over residues 3010–3031 (TPADTSTPVTTSTEASSSPTTA) the composition is skewed to low complexity. The span at 3037-3057 (PISTPSEGSTPLTSIPVSTTP) shows a compositional bias: polar residues. Composition is skewed to low complexity over residues 3073–3089 (SNSPVVTSTEVSSSPTP) and 3104–3140 (STPLTGVPVSTTPVTSSAISTLSTTPVDTSTPVTTST). Over residues 3141–3166 (EAHSSPTTSEGTSMPTSTPSEGSTPL) the composition is skewed to polar residues. A compositionally biased stretch (low complexity) spans 3185 to 3211 (SATPVDTSTPVTTSTEATSSTTAEGTS). Over residues 3212–3253 (IPTSTPSEGMTPLTSVPVSNTPVASSEASILSTTPVDSNTPL) the composition is skewed to polar residues. The segment covering 3254-3267 (TTSTEASSSPPTAE) has biased composition (low complexity). Residues 3268-3288 (GTSMPTSTPSEGSTPLTSMPV) show a composition bias toward polar residues. Residues 3289-3314 (STTTVASSETSTLSTTPADTSTPVTT) are compositionally biased toward low complexity. Residues 3329-3357 (SMPTSTYSEGSTPLTNMSFSTTPVVSSEA) are compositionally biased toward polar residues. A glycan (N-linked (GlcNAc...) asparagine) is linked at asparagine 3344. Positions 3358–3375 (STLSTTPVDTSTPVTTST) are enriched in low complexity. Residues 3376 to 3401 (EASLSPTTAEGTSIPTSSPSEGTTPL) are compositionally biased toward polar residues. A compositionally biased stretch (low complexity) spans 3405-3414 (PVSTTPVVSS). Composition is skewed to polar residues over residues 3415 to 3441 (EVNTLSTTPVDSNTLVTTSTEASSSPT) and 3447 to 3475 (SLPTSTTSEGSTPLSIMPLSTTPVASSEA). Positions 3476–3501 (STLSTTPVDTSTPVTTSSPTNSSPTT) are enriched in low complexity. Polar residues-rich tracts occupy residues 3502-3549 (AEVT…TFVT) and 3558-3571 (PATLQVTTMRMSTP). Positions 3589 to 3616 (TSSEASTPSTPSVDRSTPVTTSTQSNST) are enriched in low complexity. Tandem repeats lie at residues 3604–3662 (STPV…PVDT) and 3663–3727 (STPV…PVTT). Positions 3626 to 3635 (PMSTPSEVST) are enriched in polar residues. Residues 3667–3679 (ITSTQVSSSPVTP) show a composition bias toward low complexity. Composition is skewed to polar residues over residues 3690-3701 (SEGSTPLTTMPV) and 3785-3806 (MTTASEGSSSPTTLEGTTTMPM). Low complexity-rich tracts occupy residues 3967-3988 (TSTELNTPSTSSSSTTTSFSTT), 4008-4083 (STAP…SSTT), and 4090-4129 (TTMTTRTKPSTRTTSFPTVTTTAVPTNTTIKSNPTSTPTV). Asparagine 4116 carries an N-linked (GlcNAc...) asparagine glycan. In terms of domain architecture, EGF-like spans 4131 to 4170 (RTTTCFGDGCQNTASRCKNGGTWDGLKCQCPNLYYGELCE). 3 disulfides stabilise this stretch: cysteine 4135–cysteine 4147, cysteine 4140–cysteine 4158, and cysteine 4160–cysteine 4169. Residues 4184-4291 (ISAQMELTVT…QQIMINDICS (108 aa)) form the SEA domain. Residues asparagine 4205, asparagine 4236, asparagine 4267, asparagine 4297, and asparagine 4305 are each glycosylated (N-linked (GlcNAc...) asparagine). The helical transmembrane segment at 4394 to 4414 (LVGAGVVLMLIILVALLMLVF) threads the bilayer. The Cytoplasmic portion of the chain corresponds to 4415 to 4493 (RSKREVKRQK…QRPQVMTTSF (79 aa)).

As to quaternary structure, interacts via its C-terminus with PDZK1 and this interaction appears important for proper localization. Probably cleaved within the SEA domain. Post-translationally, N-glycosylated. Contains high mannose and complex-type glycans. The forms containing the complex type glycans localize to the cell surface. Not O-glycosylated. As to expression, expressed almost exclusively in the intestine. Expression is especially high in both the duodenum and transverse colon. Expressed in mature absorptive cells of the small intestinal villi. No expression is detected in goblet cells. Highly expressed in pancreatic adenocarcinoma tissue (at protein level). Expression is not detectable in normal pancreas, in pancreatitis or in cell lines derived from other cancers.

It is found in the cell membrane. The protein resides in the secreted. Its function is as follows. Probably plays a role in maintaining homeostasis on mucosal surfaces. The chain is Mucin-17 (MUC17) from Homo sapiens (Human).